Here is a 352-residue protein sequence, read N- to C-terminus: tRNA pseudouridine synthase D (352 aa).

The active-site Nucleophile is D81. In terms of domain architecture, TRUD spans 157 to 303; the sequence is GVPNYFGLQR…MLHERRILRL (147 aa).

This sequence belongs to the pseudouridine synthase TruD family.

The catalysed reaction is uridine(13) in tRNA = pseudouridine(13) in tRNA. In terms of biological role, responsible for synthesis of pseudouridine from uracil-13 in transfer RNAs. The chain is tRNA pseudouridine synthase D from Azotobacter vinelandii (strain DJ / ATCC BAA-1303).